Reading from the N-terminus, the 528-residue chain is Peptide chain release factor 3 (528 aa).

The tr-type G domain occupies 11–279 (SDRRTFAIIS…GFVEWAPAPI (269 aa)). GTP is bound by residues 20 to 27 (SHPDAGKT), 88 to 92 (DTPGH), and 142 to 145 (NKMD).

Belongs to the TRAFAC class translation factor GTPase superfamily. Classic translation factor GTPase family. PrfC subfamily.

The protein localises to the cytoplasm. Functionally, increases the formation of ribosomal termination complexes and stimulates activities of RF-1 and RF-2. It binds guanine nucleotides and has strong preference for UGA stop codons. It may interact directly with the ribosome. The stimulation of RF-1 and RF-2 is significantly reduced by GTP and GDP, but not by GMP. The polypeptide is Peptide chain release factor 3 (Marinomonas sp. (strain MWYL1)).